The following is a 166-amino-acid chain: Regulatory protein RecX (166 aa).

Belongs to the RecX family.

It localises to the cytoplasm. In terms of biological role, modulates RecA activity. The polypeptide is Regulatory protein RecX (Escherichia fergusonii (strain ATCC 35469 / DSM 13698 / CCUG 18766 / IAM 14443 / JCM 21226 / LMG 7866 / NBRC 102419 / NCTC 12128 / CDC 0568-73)).